The chain runs to 105 residues: Larval cuticle protein 65Ag1 (105 aa).

The first 18 residues, 1–18, serve as a signal peptide directing secretion; sequence MKFLIVFVALFAVALAAP. Residues 34–103 form the Chitin-binding type R&amp;R domain; it reads PESFKYDWET…PQGAHLPVAP (70 aa).

Functionally, component of the cuticle of the larva. The protein is Larval cuticle protein 65Ag1 of Drosophila melanogaster (Fruit fly).